The primary structure comprises 98 residues: MSLVYMNIMTAFMVSLAGLLMYRSHLMSSLLCLEGMMLSLFVLATLTILNSHFTLASMMPIILLVFAACEAALGLSLLVMVSNTYGTDYVQNLNLLQC.

A run of 3 helical transmembrane segments spans residues 1–21 (MSLV…GLLM), 29–49 (SLLC…LTIL), and 61–81 (IILL…LVMV).

This sequence belongs to the complex I subunit 4L family. In terms of assembly, core subunit of respiratory chain NADH dehydrogenase (Complex I) which is composed of 45 different subunits.

It localises to the mitochondrion inner membrane. The catalysed reaction is a ubiquinone + NADH + 5 H(+)(in) = a ubiquinol + NAD(+) + 4 H(+)(out). In terms of biological role, core subunit of the mitochondrial membrane respiratory chain NADH dehydrogenase (Complex I) which catalyzes electron transfer from NADH through the respiratory chain, using ubiquinone as an electron acceptor. Part of the enzyme membrane arm which is embedded in the lipid bilayer and involved in proton translocation. This is NADH-ubiquinone oxidoreductase chain 4L (MT-ND4L) from Muntiacus feae (Fea's muntjac).